The sequence spans 151 residues: Cathelicidin-3 (151 aa).

Residues 1-17 (MLSCWVLLLALLGGACA) form the signal peptide. Positions 18–122 (LPAPLGYSQA…TCVDSMADPV (105 aa)) are excised as a propeptide. Cystine bridges form between Cys-75–Cys-86 and Cys-97–Cys-114. A helical transmembrane segment spans residues 128-148 (WPLVPVAINTVAAGINLYKAI).

This sequence belongs to the cathelicidin family. In terms of tissue distribution, detected in bone marrow, liver and lung.

Its subcellular location is the secreted. It is found in the membrane. In terms of biological role, may bind bacterial lipopolysaccharide (LPS). May have antimicrobial activity and play a role in the innate immune response. The chain is Cathelicidin-3 (CATHL3) from Gallus gallus (Chicken).